Reading from the N-terminus, the 57-residue chain is Large ribosomal subunit protein bL32c (57 aa).

It belongs to the bacterial ribosomal protein bL32 family.

Its subcellular location is the plastid. It localises to the chloroplast. This Vitis vinifera (Grape) protein is Large ribosomal subunit protein bL32c.